The following is a 130-amino-acid chain: Small ribosomal subunit protein uS8 (130 aa).

The protein belongs to the universal ribosomal protein uS8 family. Part of the 30S ribosomal subunit. Contacts proteins S5 and S12.

Functionally, one of the primary rRNA binding proteins, it binds directly to 16S rRNA central domain where it helps coordinate assembly of the platform of the 30S subunit. The sequence is that of Small ribosomal subunit protein uS8 from Vibrio atlanticus (strain LGP32) (Vibrio splendidus (strain Mel32)).